The sequence spans 154 residues: Large ribosomal subunit protein uL16 (154 aa).

It belongs to the universal ribosomal protein uL16 family. In terms of assembly, part of the 50S ribosomal subunit.

Binds 23S rRNA and is also seen to make contacts with the A and possibly P site tRNAs. The polypeptide is Large ribosomal subunit protein uL16 (Synechococcus sp. (strain RCC307)).